The sequence spans 78 residues: Putative membrane protein insertion efficiency factor (78 aa).

The protein belongs to the UPF0161 family.

It is found in the cell membrane. Its function is as follows. Could be involved in insertion of integral membrane proteins into the membrane. The sequence is that of Putative membrane protein insertion efficiency factor from Bacillus mycoides (strain KBAB4) (Bacillus weihenstephanensis).